Consider the following 371-residue polypeptide: uncharacterized protein (371 aa).

The tract at residues 339–371 (KVTHEDLVKNRPRSPVRPPIPATAKTPDLPERH) is disordered.

This is an uncharacterized protein from Escherichia coli (strain K12).